The following is a 363-amino-acid chain: Protein-arginine kinase (363 aa).

The Phosphagen kinase C-terminal domain occupies 24–254 (IVLSSRIRLA…AQLIEQERSA (231 aa)). ATP-binding positions include 27 to 31 (SSRIR), His92, Arg125, 176 to 180 (RASVM), and 207 to 212 (RGIYGE). The RDXXRA motif of the pArg binding pocket involved in allosteric regulation signature appears at 337–342 (RDIRRA).

The protein belongs to the ATP:guanido phosphotransferase family.

It carries out the reaction L-arginyl-[protein] + ATP = N(omega)-phospho-L-arginyl-[protein] + ADP + H(+). With respect to regulation, appears to be allosterically activated by the binding of pArg-containing polypeptides to the pArg-binding pocket localized in the C-terminal domain of McsB. Catalyzes the specific phosphorylation of arginine residues in a large number of proteins. Is part of the bacterial stress response system. Protein arginine phosphorylation has a physiologically important role and is involved in the regulation of many critical cellular processes, such as protein homeostasis, motility, competence, and stringent and stress responses, by regulating gene expression and protein activity. This Bacillus licheniformis (strain ATCC 14580 / DSM 13 / JCM 2505 / CCUG 7422 / NBRC 12200 / NCIMB 9375 / NCTC 10341 / NRRL NRS-1264 / Gibson 46) protein is Protein-arginine kinase.